We begin with the raw amino-acid sequence, 122 residues long: SLLQFRKMIKKMTGKEPVVSYAFYGCYCGSGGRGKPKDATDRCCFVHQCCYEKVTGCDPKWDDYTYSWKDGDIVCGGDDPCKKEVCECDRAAAICFRDNLKTYKKIYMAYPDIFCSSKSEKC.

Disulfide bonds link Cys26–Cys115, Cys28–Cys44, Cys43–Cys95, Cys49–Cys122, Cys50–Cys88, Cys57–Cys81, and Cys75–Cys86.

It belongs to the phospholipase A2 family. Group II subfamily. Q49 sub-subfamily. As to quaternary structure, monomer. In terms of tissue distribution, expressed by the venom gland.

Its subcellular location is the secreted. Functionally, snake venom phospholipase A2 (PLA2) homolog that shows local myotoxicity, apparent anticoagulant activity, and neurotoxicity. Shows analgesic effect on mice due to a decrease of action potentials and nerve conduction velocity. These effects are caused by inhibition of voltage-gated ion channels (potassium (Kv) and sodium (Nav)). In addition, analgesic effects are antagonized by naloxone, implying the mechanism of action is correlated with opioid receptors (probably indirectly). Does not show detectable PLA2 activity on egg yolk phospholipids. The sequence is that of Basic phospholipase A2 homolog Gln49-PLA2 from Gloydius ussuriensis (Ussuri mamushi).